Here is a 99-residue protein sequence, read N- to C-terminus: Large ribosomal subunit protein bL28 (99 aa).

The disordered stretch occupies residues 1-25 (MSRKCAVTGKGVQTGNNVSHANNKS). Residues 11-22 (GVQTGNNVSHAN) show a composition bias toward polar residues.

This sequence belongs to the bacterial ribosomal protein bL28 family.

The polypeptide is Large ribosomal subunit protein bL28 (Rhodospirillum centenum (strain ATCC 51521 / SW)).